Reading from the N-terminus, the 128-residue chain is Cystatin-12 (128 aa).

The N-terminal stretch at 1-21 (MLWKSVLSVALIVLGIHDCSF) is a signal peptide. Cystine bridges form between cysteine 82–cysteine 92 and cysteine 105–cysteine 125. An N-linked (GlcNAc...) asparagine glycan is attached at asparagine 122.

Belongs to the cystatin family. As to expression, located at the very proximal caput epididymis (at protein level). Expressed in epididymis, Sertoli cells and testis. Also found to be weakly expressed in ovary and prostate.

It is found in the secreted. May play a specialized role in spermatogenesis. The sequence is that of Cystatin-12 (Cst12) from Mus musculus (Mouse).